The primary structure comprises 253 residues: Probable transcriptional regulatory protein SynRCC307_1833 (253 aa).

This sequence belongs to the TACO1 family.

The protein resides in the cytoplasm. This chain is Probable transcriptional regulatory protein SynRCC307_1833, found in Synechococcus sp. (strain RCC307).